A 271-amino-acid chain; its full sequence is Tryptophan synthase alpha chain (271 aa).

Active-site proton acceptor residues include Glu49 and Asp60.

It belongs to the TrpA family. As to quaternary structure, tetramer of two alpha and two beta chains.

The enzyme catalyses (1S,2R)-1-C-(indol-3-yl)glycerol 3-phosphate + L-serine = D-glyceraldehyde 3-phosphate + L-tryptophan + H2O. Its pathway is amino-acid biosynthesis; L-tryptophan biosynthesis; L-tryptophan from chorismate: step 5/5. In terms of biological role, the alpha subunit is responsible for the aldol cleavage of indoleglycerol phosphate to indole and glyceraldehyde 3-phosphate. The polypeptide is Tryptophan synthase alpha chain (Azoarcus sp. (strain BH72)).